The sequence spans 609 residues: MTARGETPEVETREDEEQSVKLAEILELLVAAGYFRARIKGLSPFDKVVGGMTWCITTCNFDIDVDLLFQENSTIGQKIALTEKIVSVLPKMKCPHRLEPHQIQGLDFIHIFPVIQWLVKRAIETRQEMGDYIRSYSVSQFQKEHSLPEDQEFEHRREKAVRTLSETLDVYRPRRKYKRQGGSAELMDEESRVHSTLLEYGRRYGLSKQMKPEKPEDRKVPVPQGLVGKGEVKEEEELRAEEELRIKALMTEMAAMGMEEGRLTASTVGQIVGLQSDEIKQMVSEYAEKQSELSAEDRPEYLGAAQQHRRKVASLNKQIGQRKKLLDQLQEKASELQSGSCEAKKQLTEVTSHMENLEQELLVLEKVESKADPSVLQKLRDLVAQNESLKLQEQQFRSKCREEMSRLQQNIDSLKAAATEHGEEKEQSQAFEQQYKAEKEKLQKIRLLLARRNREIAILHRKIDEVPSRAELTQYQKRFIELYGQVSATHKETKQFFTLYNTLDDKKVYLEKEVNLLNSVHDNFQQAMASPSVRDQFLRQMEQIVDGIRQSRNKMEKKKQENKMKRDQLNDEYLELLEKQRLYFKTVKEFREECRRNETLLTKMKGQTP.

Coiled-coil stretches lie at residues 229 to 459 (KGEV…IAIL) and 510 to 579 (LEKE…LLEK).

The protein belongs to the CCDC93 family.

The protein localises to the early endosome. May be involved in copper-dependent atp7a trafficking between the trans-Golgi network and vesicles in the cell periphery. This chain is Coiled-coil domain-containing protein 93 (ccdc93), found in Xenopus laevis (African clawed frog).